Here is a 123-residue protein sequence, read N- to C-terminus: Large ribosomal subunit protein bL12 (123 aa).

The protein belongs to the bacterial ribosomal protein bL12 family. As to quaternary structure, homodimer. Part of the ribosomal stalk of the 50S ribosomal subunit. Forms a multimeric L10(L12)X complex, where L10 forms an elongated spine to which 2 to 4 L12 dimers bind in a sequential fashion. Binds GTP-bound translation factors.

Functionally, forms part of the ribosomal stalk which helps the ribosome interact with GTP-bound translation factors. Is thus essential for accurate translation. The polypeptide is Large ribosomal subunit protein bL12 (Aliarcobacter butzleri (strain RM4018) (Arcobacter butzleri)).